We begin with the raw amino-acid sequence, 571 residues long: Dihydroxy-acid dehydratase (571 aa).

Cys-56 serves as a coordination point for [2Fe-2S] cluster. Asp-88 contacts Mg(2+). Cys-129 provides a ligand contact to [2Fe-2S] cluster. Mg(2+)-binding residues include Asp-130 and Lys-131. Lys-131 is modified (N6-carboxylysine). Cys-201 contacts [2Fe-2S] cluster. Residue Glu-452 coordinates Mg(2+). Ser-478 serves as the catalytic Proton acceptor.

It belongs to the IlvD/Edd family. Homodimer. [2Fe-2S] cluster is required as a cofactor. It depends on Mg(2+) as a cofactor.

It catalyses the reaction (2R)-2,3-dihydroxy-3-methylbutanoate = 3-methyl-2-oxobutanoate + H2O. It carries out the reaction (2R,3R)-2,3-dihydroxy-3-methylpentanoate = (S)-3-methyl-2-oxopentanoate + H2O. Its pathway is amino-acid biosynthesis; L-isoleucine biosynthesis; L-isoleucine from 2-oxobutanoate: step 3/4. It functions in the pathway amino-acid biosynthesis; L-valine biosynthesis; L-valine from pyruvate: step 3/4. Functionally, functions in the biosynthesis of branched-chain amino acids. Catalyzes the dehydration of (2R,3R)-2,3-dihydroxy-3-methylpentanoate (2,3-dihydroxy-3-methylvalerate) into 2-oxo-3-methylpentanoate (2-oxo-3-methylvalerate) and of (2R)-2,3-dihydroxy-3-methylbutanoate (2,3-dihydroxyisovalerate) into 2-oxo-3-methylbutanoate (2-oxoisovalerate), the penultimate precursor to L-isoleucine and L-valine, respectively. This Streptococcus suis (strain 98HAH33) protein is Dihydroxy-acid dehydratase.